The sequence spans 124 residues: S-adenosylmethionine decarboxylase proenzyme (124 aa).

The active-site Schiff-base intermediate with substrate; via pyruvic acid is Ser70. Ser70 bears the Pyruvic acid (Ser); by autocatalysis mark. The Proton acceptor; for processing activity role is filled by His75. The Proton donor; for catalytic activity role is filled by Cys90.

It belongs to the prokaryotic AdoMetDC family. Type 1 subfamily. As to quaternary structure, heterotetramer of two alpha and two beta chains arranged as a dimer of alpha/beta heterodimers. It depends on pyruvate as a cofactor. In terms of processing, is synthesized initially as an inactive proenzyme. Formation of the active enzyme involves a self-maturation process in which the active site pyruvoyl group is generated from an internal serine residue via an autocatalytic post-translational modification. Two non-identical subunits are generated from the proenzyme in this reaction, and the pyruvate is formed at the N-terminus of the alpha chain, which is derived from the carboxyl end of the proenzyme. The post-translation cleavage follows an unusual pathway, termed non-hydrolytic serinolysis, in which the side chain hydroxyl group of the serine supplies its oxygen atom to form the C-terminus of the beta chain, while the remainder of the serine residue undergoes an oxidative deamination to produce ammonia and the pyruvoyl group blocking the N-terminus of the alpha chain.

The catalysed reaction is S-adenosyl-L-methionine + H(+) = S-adenosyl 3-(methylsulfanyl)propylamine + CO2. Its pathway is amine and polyamine biosynthesis; S-adenosylmethioninamine biosynthesis; S-adenosylmethioninamine from S-adenosyl-L-methionine: step 1/1. In terms of biological role, catalyzes the decarboxylation of S-adenosylmethionine to S-adenosylmethioninamine (dcAdoMet), the propylamine donor required for the synthesis of the polyamines spermine and spermidine from the diamine putrescine. The protein is S-adenosylmethionine decarboxylase proenzyme of Pyrobaculum neutrophilum (strain DSM 2338 / JCM 9278 / NBRC 100436 / V24Sta) (Thermoproteus neutrophilus).